A 260-amino-acid polypeptide reads, in one-letter code: MTHQHPYHLVDQSPWPLTGAISALMMTSGLILWFHTNSNHLLLAGTILLLLTVINWWRDVIREATFQGSHTLPVNTGLRYGMILFITSEVCFFFAFFWAFFHSSLAPTVELGVSWPPTGISPINPFLVPLLNTAVLLSSGVTVTWAHHSILTQNRTEAIQGLFLTVILGIYFTGLQAWEYYDSPFTIADSVYGSSFFVATGFHGLHVLIGTTFLFICFLRLITFHFSNNHHFGFEAAAWYWHFVDVVWLFLYICICWWGS.

7 helical membrane-spanning segments follow: residues 14–34 (PWPLTGAISALMMTSGLILWF), 41–61 (LLLAGTILLLLTVINWWRDVI), 81–101 (GMILFITSEVCFFFAFFWAFF), 126–146 (FLVPLLNTAVLLSSGVTVTWA), 158–178 (AIQGLFLTVILGIYFTGLQAW), 196–216 (FFVATGFHGLHVLIGTTFLFI), and 238–258 (AWYWHFVDVVWLFLYICICWW).

Belongs to the cytochrome c oxidase subunit 3 family. In terms of assembly, component of the cytochrome c oxidase (complex IV, CIV), a multisubunit enzyme composed of a catalytic core of 3 subunits and several supernumerary subunits. The complex exists as a monomer or a dimer and forms supercomplexes (SCs) in the inner mitochondrial membrane with ubiquinol-cytochrome c oxidoreductase (cytochrome b-c1 complex, complex III, CIII).

It is found in the mitochondrion inner membrane. The catalysed reaction is 4 Fe(II)-[cytochrome c] + O2 + 8 H(+)(in) = 4 Fe(III)-[cytochrome c] + 2 H2O + 4 H(+)(out). Its function is as follows. Component of the cytochrome c oxidase, the last enzyme in the mitochondrial electron transport chain which drives oxidative phosphorylation. The respiratory chain contains 3 multisubunit complexes succinate dehydrogenase (complex II, CII), ubiquinol-cytochrome c oxidoreductase (cytochrome b-c1 complex, complex III, CIII) and cytochrome c oxidase (complex IV, CIV), that cooperate to transfer electrons derived from NADH and succinate to molecular oxygen, creating an electrochemical gradient over the inner membrane that drives transmembrane transport and the ATP synthase. Cytochrome c oxidase is the component of the respiratory chain that catalyzes the reduction of oxygen to water. Electrons originating from reduced cytochrome c in the intermembrane space (IMS) are transferred via the dinuclear copper A center (CU(A)) of subunit 2 and heme A of subunit 1 to the active site in subunit 1, a binuclear center (BNC) formed by heme A3 and copper B (CU(B)). The BNC reduces molecular oxygen to 2 water molecules using 4 electrons from cytochrome c in the IMS and 4 protons from the mitochondrial matrix. In Patiria pectinifera (Starfish), this protein is Cytochrome c oxidase subunit 3 (COIII).